Here is a 694-residue protein sequence, read N- to C-terminus: Elongation factor G (694 aa).

A tr-type G domain is found at 11-285; that stretch reads KDYRNIGIMA…AVIDYLPSPL (275 aa). GTP is bound by residues 20–27, 84–88, and 138–141; these read AHIDAGKT, DTPGH, and NKMD.

The protein belongs to the TRAFAC class translation factor GTPase superfamily. Classic translation factor GTPase family. EF-G/EF-2 subfamily.

The protein resides in the cytoplasm. Catalyzes the GTP-dependent ribosomal translocation step during translation elongation. During this step, the ribosome changes from the pre-translocational (PRE) to the post-translocational (POST) state as the newly formed A-site-bound peptidyl-tRNA and P-site-bound deacylated tRNA move to the P and E sites, respectively. Catalyzes the coordinated movement of the two tRNA molecules, the mRNA and conformational changes in the ribosome. The polypeptide is Elongation factor G (Mycoplasma mobile (strain ATCC 43663 / 163K / NCTC 11711) (Mesomycoplasma mobile)).